A 114-amino-acid chain; its full sequence is T cell receptor alpha variable 12-3 (114 aa).

The signal sequence occupies residues 1–21; that stretch reads MMKSLRVLLVILWLQLSWVWS. In terms of domain architecture, Ig-like spans 24-114; that stretch reads KEVEQDPGPL…DSATYLCAMS (91 aa). Asn-44 is a glycosylation site (N-linked (GlcNAc...) asparagine). A disulfide bridge links Cys-45 with Cys-111.

Alpha-beta TR is a heterodimer composed of an alpha and beta chain; disulfide-linked. The alpha-beta TR is associated with the transmembrane signaling CD3 coreceptor proteins to form the TR-CD3 (TcR or TCR). The assembly of alpha-beta TR heterodimers with CD3 occurs in the endoplasmic reticulum where a single alpha-beta TR heterodimer associates with one CD3D-CD3E heterodimer, one CD3G-CD3E heterodimer and one CD247 homodimer forming a stable octameric structure. CD3D-CD3E and CD3G-CD3E heterodimers preferentially associate with TR alpha and TR beta chains, respectively. The association of the CD247 homodimer is the last step of TcR assembly in the endoplasmic reticulum and is required for transport to the cell surface.

The protein resides in the cell membrane. Functionally, v region of the variable domain of T cell receptor (TR) alpha chain that participates in the antigen recognition. Alpha-beta T cell receptors are antigen specific receptors which are essential to the immune response and are present on the cell surface of T lymphocytes. Recognize peptide-major histocompatibility (MH) (pMH) complexes that are displayed by antigen presenting cells (APC), a prerequisite for efficient T cell adaptive immunity against pathogens. Binding of alpha-beta TR to pMH complex initiates TR-CD3 clustering on the cell surface and intracellular activation of LCK that phosphorylates the ITAM motifs of CD3G, CD3D, CD3E and CD247 enabling the recruitment of ZAP70. In turn ZAP70 phosphorylates LAT, which recruits numerous signaling molecules to form the LAT signalosome. The LAT signalosome propagates signal branching to three major signaling pathways, the calcium, the mitogen-activated protein kinase (MAPK) kinase and the nuclear factor NF-kappa-B (NF-kB) pathways, leading to the mobilization of transcription factors that are critical for gene expression and essential for T cell growth and differentiation. The T cell repertoire is generated in the thymus, by V-(D)-J rearrangement. This repertoire is then shaped by intrathymic selection events to generate a peripheral T cell pool of self-MH restricted, non-autoaggressive T cells. Post-thymic interaction of alpha-beta TR with the pMH complexes shapes TR structural and functional avidity. The chain is T cell receptor alpha variable 12-3 from Homo sapiens (Human).